We begin with the raw amino-acid sequence, 364 residues long: Aminomethyltransferase (364 aa).

The protein belongs to the GcvT family. As to quaternary structure, the glycine cleavage system is composed of four proteins: P, T, L and H.

The enzyme catalyses N(6)-[(R)-S(8)-aminomethyldihydrolipoyl]-L-lysyl-[protein] + (6S)-5,6,7,8-tetrahydrofolate = N(6)-[(R)-dihydrolipoyl]-L-lysyl-[protein] + (6R)-5,10-methylene-5,6,7,8-tetrahydrofolate + NH4(+). Its function is as follows. The glycine cleavage system catalyzes the degradation of glycine. The protein is Aminomethyltransferase of Klebsiella pneumoniae subsp. pneumoniae (strain ATCC 700721 / MGH 78578).